Here is a 145-residue protein sequence, read N- to C-terminus: UPF0201 protein Saci_1285 (145 aa).

It belongs to the UPF0201 family.

The sequence is that of UPF0201 protein Saci_1285 from Sulfolobus acidocaldarius (strain ATCC 33909 / DSM 639 / JCM 8929 / NBRC 15157 / NCIMB 11770).